Here is a 425-residue protein sequence, read N- to C-terminus: Spermatogenesis- and oogenesis-specific basic helix-loop-helix-containing protein 2 (425 aa).

Residues 201–252 (KISLLHSSKEKLRRERIKYCCEQLRTLLPYVKGRKNDAASVLEATVDYVKYI) enclose the bHLH domain.

Forms both hetero- and homodimers with SOHLH1.

It localises to the nucleus. Its subcellular location is the cytoplasm. Functionally, transcription regulator of both male and female germline differentiation. Suppresses genes involved in spermatogonial stem cells maintenance, and induces genes important for spermatogonial differentiation. Coordinates oocyte differentiation without affecting meiosis I. This Homo sapiens (Human) protein is Spermatogenesis- and oogenesis-specific basic helix-loop-helix-containing protein 2 (SOHLH2).